A 40-amino-acid polypeptide reads, in one-letter code: Natriuretic peptide PtNP-a (40 aa).

A disulfide bridge connects residues Cys-9 and Cys-25. The segment covering 17-34 (ISNTSGMGCRNPIQNRPK) has biased composition (polar residues). Positions 17-40 (ISNTSGMGCRNPIQNRPKSTPGGS) are disordered.

It belongs to the natriuretic peptide family. As to expression, expressed by the venom gland.

The protein resides in the secreted. Functionally, snake venom natriuretic peptide that targets NPR1 and possibly NPR2. Exhibits hypotensive and vasodepressor activities. Recombinant PtNP-a demonstrates a dose-dependent stimulation of cGMP production via the natriuretic peptide receptor 1 (NPR1) (EC(50)=563 nM) in Madine Darby Canine Kidney (MDCK) cells. It also inhibits the angiotensin converting enzyme (ACE). This chain is Natriuretic peptide PtNP-a, found in Pseudonaja textilis (Eastern brown snake).